A 407-amino-acid chain; its full sequence is Proteasome-activating nucleotidase (407 aa).

A coiled-coil region spans residues K22–I67. ATP is bound by residues G192–L197 and H331. Positions M405–G407 are docks into pockets in the proteasome alpha-ring to cause gate opening.

It belongs to the AAA ATPase family. Homohexamer. The hexameric complex has a two-ring architecture resembling a top hat that caps the 20S proteasome core at one or both ends. Upon ATP-binding, the C-terminus of PAN interacts with the alpha-rings of the proteasome core by binding to the intersubunit pockets.

The protein localises to the cytoplasm. Its function is as follows. ATPase which is responsible for recognizing, binding, unfolding and translocation of substrate proteins into the archaeal 20S proteasome core particle. Is essential for opening the gate of the 20S proteasome via an interaction with its C-terminus, thereby allowing substrate entry and access to the site of proteolysis. Thus, the C-termini of the proteasomal ATPase function like a 'key in a lock' to induce gate opening and therefore regulate proteolysis. Unfolding activity requires energy from ATP hydrolysis, whereas ATP binding alone promotes ATPase-20S proteasome association which triggers gate opening, and supports translocation of unfolded substrates. This Methanococcus maripaludis (strain C6 / ATCC BAA-1332) protein is Proteasome-activating nucleotidase.